The sequence spans 197 residues: MAERKARVERNTLETQITVEINLDGTGKANFDTGVPFLEHMMDQIARHGLVDLDITCKGDLHIDDHHTVEDIGITLGQAFKQAVGDKKGIRRYGHAYVPLDEALSRVVIDLSGRPGLLMDVPYTRASVGGFDVDLFAEFFQGFVNHSMVTLHIDNLKGKNTHHQIETVFKAFGRALRMAIEMDERMAGITPSTKGAL.

Belongs to the imidazoleglycerol-phosphate dehydratase family.

It localises to the cytoplasm. The enzyme catalyses D-erythro-1-(imidazol-4-yl)glycerol 3-phosphate = 3-(imidazol-4-yl)-2-oxopropyl phosphate + H2O. Its pathway is amino-acid biosynthesis; L-histidine biosynthesis; L-histidine from 5-phospho-alpha-D-ribose 1-diphosphate: step 6/9. This is Imidazoleglycerol-phosphate dehydratase from Marinobacter nauticus (strain ATCC 700491 / DSM 11845 / VT8) (Marinobacter aquaeolei).